A 165-amino-acid polypeptide reads, in one-letter code: Ribosome maturation factor RimM (165 aa).

The PRC barrel domain occupies 94-165 (EDEFYIADLN…YVILNYQTKV (72 aa)).

The protein belongs to the RimM family. As to quaternary structure, binds ribosomal protein uS19.

Its subcellular location is the cytoplasm. An accessory protein needed during the final step in the assembly of 30S ribosomal subunit, possibly for assembly of the head region. Essential for efficient processing of 16S rRNA. May be needed both before and after RbfA during the maturation of 16S rRNA. It has affinity for free ribosomal 30S subunits but not for 70S ribosomes. This is Ribosome maturation factor RimM from Rickettsia typhi (strain ATCC VR-144 / Wilmington).